The primary structure comprises 213 residues: Probable lipid phosphate phosphatase beta (213 aa).

The next 5 membrane-spanning stretches (helical) occupy residues Pro30 to Phe50, Val67 to Phe87, Val118 to Gly138, Val158 to Leu178, and His181 to Leu201.

Belongs to the PA-phosphatase related phosphoesterase family.

It is found in the membrane. The protein is Probable lipid phosphate phosphatase beta (LPPB) of Arabidopsis thaliana (Mouse-ear cress).